Here is a 306-residue protein sequence, read N- to C-terminus: Oligopeptide transport system permease protein OppB (306 aa).

Over 1-11 (MLKFILRRCLE) the chain is Cytoplasmic. Residues 12 to 32 (AIPTLFILITISFFMMRLAPG) traverse the membrane as a helical segment. At 33–99 (SPFTGERTLP…VASSFPVSAK (67 aa)) the chain is on the periplasmic side. An ABC transmembrane type-1 domain is found at 94–293 (FPVSAKLGAA…ALTILFNAIV (200 aa)). The helical transmembrane segment at 100–120 (LGAAAFFLAVILGVSAGVIAA) threads the bilayer. At 121-137 (LKQNTKWDYTVMGLAMT) the chain is on the cytoplasmic side. The chain crosses the membrane as a helical span at residues 138-158 (GVVIPSFVVAPLLVMIFAIIL). Residues 159 to 169 (HWLPGGGWNGG) lie on the Periplasmic side of the membrane. A helical membrane pass occupies residues 170–190 (ALKFMILPMVALSLAYIASIA). The Cytoplasmic portion of the chain corresponds to 191 to 229 (RITRGSMIEVLHSNFIRTARAKGLPMRRIILRHALKPAL). Residues 230 to 250 (LPVLSYMGPAFVGIITGSMVI) traverse the membrane as a helical segment. Residues 251–279 (ETIYGLPGIGQLFVNGALNRDYSLVLSLT) are Periplasmic-facing. Residues 280 to 300 (ILVGALTILFNAIVDVLYAVI) traverse the membrane as a helical segment. Topologically, residues 301-306 (DPKIRY) are cytoplasmic.

The protein belongs to the binding-protein-dependent transport system permease family. OppBC subfamily. In terms of assembly, the complex is composed of two ATP-binding proteins (OppD and OppF), two transmembrane proteins (OppB and OppC) and a solute-binding protein (OppA).

It localises to the cell inner membrane. In terms of biological role, part of the ABC transporter complex OppABCDF involved in the uptake of oligopeptides. Probably responsible for the translocation of the substrate across the membrane. This chain is Oligopeptide transport system permease protein OppB (oppB), found in Shigella flexneri.